A 101-amino-acid polypeptide reads, in one-letter code: Large ribosomal subunit protein bL28 (101 aa).

The protein belongs to the bacterial ribosomal protein bL28 family.

This is Large ribosomal subunit protein bL28 from Rhodopseudomonas palustris (strain ATCC BAA-98 / CGA009).